Consider the following 131-residue polypeptide: Cystatin-like cysteine protease inhibitor EPIC3 (131 aa).

A signal peptide spans 1-22 (MAFTRSIALFAGLALAASSAQG). N33 carries N-linked (GlcNAc...) asparagine glycosylation. Positions 71–75 (QTVAG) match the Secondary area of contact motif.

It belongs to the cystatin family.

Its subcellular location is the secreted. In terms of biological role, secreted effector that interacts with and inhibits host apoplastic pathogenesis-related papain-like cysteine proteases. Inhibition of host proteases by a pathogen extracellular protease inhibitor forms a specific type of defense-counterdefense mechanism between plants and microbial pathogens. The sequence is that of Cystatin-like cysteine protease inhibitor EPIC3 from Phytophthora infestans (strain T30-4) (Potato late blight agent).